We begin with the raw amino-acid sequence, 481 residues long: uncharacterized protein (481 aa).

The protein to M.tuberculosis RV2411c.

This is an uncharacterized protein from Synechocystis sp. (strain ATCC 27184 / PCC 6803 / Kazusa).